The chain runs to 389 residues: Chalcone synthase 6 (389 aa).

Cys-164 is an active-site residue.

This sequence belongs to the thiolase-like superfamily. Chalcone/stilbene synthases family.

It carries out the reaction (E)-4-coumaroyl-CoA + 3 malonyl-CoA + 3 H(+) = 2',4,4',6'-tetrahydroxychalcone + 3 CO2 + 4 CoA. Its pathway is secondary metabolite biosynthesis; flavonoid biosynthesis. The primary product of this enzyme is 4,2',4',6'-tetrahydroxychalcone (also termed naringenin-chalcone or chalcone) which can under specific conditions spontaneously isomerize into naringenin. This chain is Chalcone synthase 6 (CHS6), found in Pisum sativum (Garden pea).